The chain runs to 278 residues: Large ribosomal subunit protein uL2 (278 aa).

Disordered stretches follow at residues 27–57 and 224–278; these read STPE…QGGG and VAMN…NKKR. The span at 258-278 shows a compositional bias: basic residues; it reads RSPKKASSKYIVRRRKTNKKR.

It belongs to the universal ribosomal protein uL2 family. Part of the 50S ribosomal subunit. Forms a bridge to the 30S subunit in the 70S ribosome.

Its function is as follows. One of the primary rRNA binding proteins. Required for association of the 30S and 50S subunits to form the 70S ribosome, for tRNA binding and peptide bond formation. It has been suggested to have peptidyltransferase activity; this is somewhat controversial. Makes several contacts with the 16S rRNA in the 70S ribosome. The chain is Large ribosomal subunit protein uL2 from Streptomyces avermitilis (strain ATCC 31267 / DSM 46492 / JCM 5070 / NBRC 14893 / NCIMB 12804 / NRRL 8165 / MA-4680).